We begin with the raw amino-acid sequence, 493 residues long: Dihydro-heme d1 dehydrogenase (493 aa).

Residues 1 to 18 form the signal peptide; sequence MRLIGLALGLLLGALAQA. Positions 19 to 96 constitute a Cytochrome c domain; it reads GEAPGEALYR…ALVAYLYQAP (78 aa). Heme c is bound by residues cysteine 31, cysteine 34, histidine 35, arginine 68, and methionine 73. The D1-heme domain stretch occupies residues 114–468; the sequence is PHPLATLPSR…YDAHSLEEVK (355 aa). Heme d1-binding residues include histidine 165, glycine 167, lysine 169, arginine 182, arginine 207, asparagine 208, histidine 341, arginine 390, and histidine 435. Heme c is bound at residue arginine 182.

The protein belongs to the cytochrome c family. In terms of assembly, monomer. Heme c serves as cofactor.

It is found in the periplasm. The enzyme catalyses dihydro-heme d1 + A = heme d1 + AH2. It functions in the pathway porphyrin-containing compound metabolism. In terms of biological role, involved in heme d1 biosynthesis. Catalyzes the introduction of a double bond into the propionate side chain of pyrrole ring D of dihydro-heme d1, therefore converting dihydro-heme d1 to heme d1. The protein is Dihydro-heme d1 dehydrogenase of Pseudomonas aeruginosa (strain ATCC 15692 / DSM 22644 / CIP 104116 / JCM 14847 / LMG 12228 / 1C / PRS 101 / PAO1).